A 215-amino-acid chain; its full sequence is Large ribosomal subunit protein uL4 (215 aa).

The tract at residues 46 to 72 (TAKSKNRAEVSGGGRKPWAQKGGGRAR) is disordered. The segment covering 56–71 (SGGGRKPWAQKGGGRA) has biased composition (gly residues).

This sequence belongs to the universal ribosomal protein uL4 family. Part of the 50S ribosomal subunit.

Its function is as follows. One of the primary rRNA binding proteins, this protein initially binds near the 5'-end of the 23S rRNA. It is important during the early stages of 50S assembly. It makes multiple contacts with different domains of the 23S rRNA in the assembled 50S subunit and ribosome. Functionally, forms part of the polypeptide exit tunnel. In Helicobacter pylori (strain ATCC 700392 / 26695) (Campylobacter pylori), this protein is Large ribosomal subunit protein uL4.